We begin with the raw amino-acid sequence, 124 residues long: Late embryogenesis abundant protein 37 (124 aa).

The transit peptide at Met-1–Tyr-35 directs the protein to the mitochondrion.

It belongs to the LEA type 3 family.

It is found in the mitochondrion. The chain is Late embryogenesis abundant protein 37 from Arabidopsis thaliana (Mouse-ear cress).